An 862-amino-acid polypeptide reads, in one-letter code: Cytosolic carboxypeptidase 2 (862 aa).

One can recognise a Peptidase M14 domain in the interval 359-629 (YPYTYTDLQC…HVCDTLLDFC (271 aa)). Residues His-425, Glu-428, and His-521 each contribute to the Zn(2+) site. Residue Glu-593 is the Proton donor/acceptor of the active site. 3 disordered regions span residues 669-692 (SDIP…DGPP), 704-728 (NQKT…EQYQ), and 750-836 (STLQ…PNWS). Low complexity predominate over residues 674–689 (SDIESSTSGSDSSLSD). Basic residues predominate over residues 711 to 721 (NPKKKRLQTRK). The segment covering 813-825 (ASCSPKRSTNSSL) has biased composition (polar residues).

It belongs to the peptidase M14 family. In terms of assembly, interacts with RARRES1, KIF11 and MAPRE1. It depends on Zn(2+) as a cofactor. Widely expressed. Expressed in tissues with motile cilia such as testis, lung and trachea. Also detected in brain, eye, muscle, pancreas, intestine, stomach, pituitary, spleen, adrenal and kidney. Expressed in mitral and granular cells in brain.

Its subcellular location is the cytoplasm. The protein resides in the cytosol. It is found in the cytoskeleton. It localises to the microtubule organizing center. The protein localises to the centrosome. Its subcellular location is the centriole. The protein resides in the cilium basal body. The enzyme catalyses (L-glutamyl)(n+1)-gamma-L-glutamyl-L-glutamyl-[protein] + H2O = (L-glutamyl)(n)-gamma-L-glutamyl-L-glutamyl-[protein] + L-glutamate. Inhibited by RARRES1. In terms of biological role, metallocarboxypeptidase that mediates deglutamylation of tubulin and non-tubulin target proteins. Catalyzes the removal of polyglutamate side chains present on the gamma-carboxyl group of glutamate residues within the C-terminal tail of tubulin protein. Specifically cleaves tubulin long-side-chains, while it is not able to remove the branching point glutamate. Also catalyzes the removal of polyglutamate residues from the carboxy-terminus of non-tubulin proteins such as MYLK. This Mus musculus (Mouse) protein is Cytosolic carboxypeptidase 2.